We begin with the raw amino-acid sequence, 329 residues long: Mas-related G-protein coupled receptor member X2 (329 aa).

Residues 1 to 33 lie on the Extracellular side of the membrane; sequence MDPTTPAWGTESTTMNGNDQALPLFCGKETLIS. Residues 34–54 traverse the membrane as a helical segment; it reads VFLILFIALVGLVGNGFVLWL. Over 55–63 the chain is Cytoplasmic; sequence LGFRMRKNA. The helical transmembrane segment at 64–84 threads the bilayer; sequence FSVYVLSLAGADFLFLCFQII. Over 85–96 the chain is Extracellular; sequence NCLVYLSNVFCS. A helical membrane pass occupies residues 97–117; that stretch reads ISINFPSFFITVMTCAYLAGL. The Cytoplasmic portion of the chain corresponds to 118-144; sequence SMLSTISTERCLSVLWPIWYRCRRPRH. A helical membrane pass occupies residues 145–165; that stretch reads LSAVACVLLWALSLLLSILEG. The Extracellular portion of the chain corresponds to 166-183; that stretch reads KFCGLFGDGDSGWCQTFD. Residues 184–204 form a helical membrane-spanning segment; that stretch reads LITAAWLIFLFMVLCGSSLAL. The Cytoplasmic portion of the chain corresponds to 205-227; that stretch reads LVRILCGSRGLPLTRLYLTILLT. The chain crosses the membrane as a helical span at residues 228-248; sequence VLVFLLCGLPFGIQWFLILWI. Residues 249–263 are Extracellular-facing; that stretch reads WKNSDVLFCHIHPVS. The helical transmembrane segment at 264–284 threads the bilayer; that stretch reads VVLSSLNSSANPIIYFFVGSF. Topologically, residues 285–329 are cytoplasmic; the sequence is RKQWRLQQPILKLALQRALQDIAEVDHSEGCFRQGTPEMSRSSLV.

It belongs to the G-protein coupled receptor 1 family. Mas subfamily.

It is found in the cell membrane. Mast cell-specific receptor for basic secretagogues, i.e. cationic amphiphilic drugs, as well as endo- or exogenous peptides, consisting of a basic head group and a hydrophobic core. Recognizes and binds small molecules containing a cyclized tetrahydroisoquinoline (THIQ), such as non-steroidal neuromuscular blocking drugs (NMBDs), including tubocurarine and atracurium. In response to these compounds, mediates pseudo-allergic reactions characterized by histamine release, inflammation and airway contraction. The protein is Mas-related G-protein coupled receptor member X2 (MRGPRX2) of Pan troglodytes (Chimpanzee).